A 116-amino-acid polypeptide reads, in one-letter code: MFKKRLNKDKINDCYTWEEELPDGSYDMGFHGNLNHMEKGKSGYVTHKQLDKKLEVFKQDLLVELSEKFVTKEEFRAQGKQIKELQIEQKAQGKTLQLILEALQGINKRLDKLESK.

It belongs to the UPF0134 family.

This is UPF0134 protein MPN_038 from Mycoplasma pneumoniae (strain ATCC 29342 / M129 / Subtype 1) (Mycoplasmoides pneumoniae).